Here is an 891-residue protein sequence, read N- to C-terminus: Nitrate reductase [NAD(P)H] (891 aa).

A disordered region spans residues 1 to 78 (MAASVEYNRQ…VKDPRDEATS (78 aa)). Over residues 63–76 (LDVEPSVKDPRDEA) the composition is skewed to basic and acidic residues. Cys168 is a binding site for Mo-molybdopterin. Residues 515–590 (SAQFTMSEVR…LEMYRVGELI (76 aa)) form the Cytochrome b5 heme-binding domain. Heme is bound by residues His550 and His573. The 113-residue stretch at 630–742 (REKVRCRLVD…KGPVGHIEYA (113 aa)) folds into the FAD-binding FR-type domain. FAD is bound by residues 682 to 685 (RAYT), 699 to 703 (LIKIY), Phe704, Phe711, 716 to 718 (LMS), and Thr769.

The protein belongs to the nitrate reductase family. As to quaternary structure, homodimer. Requires FAD as cofactor. It depends on heme as a cofactor. The cofactor is Mo-molybdopterin.

It carries out the reaction nitrite + NAD(+) + H2O = nitrate + NADH + H(+). The catalysed reaction is nitrite + NADP(+) + H2O = nitrate + NADPH + H(+). Nitrate reductase is a key enzyme involved in the first step of nitrate assimilation in plants, fungi and bacteria. This is Nitrate reductase [NAD(P)H] (NAR-7) from Hordeum vulgare (Barley).